The sequence spans 476 residues: Ankyrin repeat, SAM and basic leucine zipper domain-containing protein 1 (476 aa).

Ser18 and Ser21 each carry phosphoserine. ANK repeat units lie at residues 46-75 (EKNE…SIDS), 79-108 (YGWT…NASF), 111-145 (DKQT…DPNV), 149-178 (RLMT…EVNT), 182-211 (NGYT…DKML), and 215-244 (DGKT…PLEG). Residues 273–335 (SYAAFEDLEI…KILAALKELE (63 aa)) enclose the SAM domain.

Interacts with DDX4, PIWIL1, RANBP9 and TDRD1.

It is found in the cytoplasm. Its function is as follows. Plays a central role during spermatogenesis by repressing transposable elements and preventing their mobilization, which is essential for the germline integrity. Acts via the piRNA metabolic process, which mediates the repression of transposable elements during meiosis by forming complexes composed of piRNAs and Piwi proteins and governs the methylation and subsequent repression of transposons. Its association with pi-bodies suggests a participation in the primary piRNAs metabolic process. Required prior to the pachytene stage to facilitate the production of multiple types of piRNAs, including those associated with repeats involved in the regulation of retrotransposons. May act by mediating protein-protein interactions during germ cell maturation. The protein is Ankyrin repeat, SAM and basic leucine zipper domain-containing protein 1 (ASZ1) of Dasypus novemcinctus (Nine-banded armadillo).